Reading from the N-terminus, the 48-residue chain is MTNKKNWKCAGCKNRYSSFDKEKKDGQLKFNCPNCGHTVRRYTILGGY.

This is an uncharacterized protein from His1 virus (isolate Australia/Victoria) (His1V).